Consider the following 480-residue polypeptide: MTAETLIASLQLSMPELILAVGAMALLMIGVFSGERATPTVTGLAVAVLIIAGLWLVLKTGEGEAYGGAFLSDPFAKFMKVLALIGSITVMVMTVGHARSAQIDRFEFPVLLVLATLGMLLMISANDLISLYLSLELQSLALYVVAAINRDSVRSTEAGLKYFVLGALSSGMMLYGMSLVYGFTGHTGFDEIAAALTAEGRSLGLVFGLVFILAGLAFKISAVPFHMWTPDVYEGAPTPVTAFFAAGPKVAAISILVRIVINAFEPVVADWQQIIVFISIASMLLGSFAAIGQRNIKRLMAYSSIGHMGYALVGLAAGSMAGVRGVILYMLIYMVMTLGTFACILAMRRREGEHVEGIDDLAGLSQTNPFMATVLTILMFSLAGIPPLAGFFAKYFVFVAAIEAQLYGLAIIGVLASVVGAYYYLRVIKVMWFEEPRGEFARTAGELRLVFGLSGLFVLGYVLIGGPLGTAAEAAARTFF.

Helical transmembrane passes span 12 to 32, 38 to 58, 78 to 98, 106 to 126, 128 to 148, 163 to 183, 203 to 223, 241 to 261, 271 to 291, 303 to 323, 326 to 346, 372 to 392, 396 to 416, and 449 to 469; these read LSMP…IGVF, TPTV…WLVL, FMKV…VGHA, FEFP…ISAN, LISL…VAAI, FVLG…VYGF, LGLV…ISAV, TAFF…RIVI, WQQI…FAAI, SSIG…MAGV, VILY…CILA, ATVL…AGFF, FVFV…GVLA, and LVFG…GPLG.

This sequence belongs to the complex I subunit 2 family. As to quaternary structure, NDH-1 is composed of 14 different subunits. Subunits NuoA, H, J, K, L, M, N constitute the membrane sector of the complex.

Its subcellular location is the cell inner membrane. The catalysed reaction is a quinone + NADH + 5 H(+)(in) = a quinol + NAD(+) + 4 H(+)(out). In terms of biological role, NDH-1 shuttles electrons from NADH, via FMN and iron-sulfur (Fe-S) centers, to quinones in the respiratory chain. The immediate electron acceptor for the enzyme in this species is believed to be ubiquinone. Couples the redox reaction to proton translocation (for every two electrons transferred, four hydrogen ions are translocated across the cytoplasmic membrane), and thus conserves the redox energy in a proton gradient. In Rhizobium meliloti (strain 1021) (Ensifer meliloti), this protein is NADH-quinone oxidoreductase subunit N 1.